Reading from the N-terminus, the 627-residue chain is Chaperone protein HtpG (627 aa).

Residues 1–343 are a; substrate-binding; that stretch reads MATQEFQAET…SEDLSLNISR (343 aa). Positions 344 to 553 are b; sequence EMLQQDKQLK…EGEISIEMEK (210 aa). Positions 554–627 are c; that stretch reads VLQSMPNNQN…YTNNVCKIMS (74 aa).

This sequence belongs to the heat shock protein 90 family. In terms of assembly, homodimer.

It is found in the cytoplasm. In terms of biological role, molecular chaperone. Has ATPase activity. The polypeptide is Chaperone protein HtpG (Natranaerobius thermophilus (strain ATCC BAA-1301 / DSM 18059 / JW/NM-WN-LF)).